We begin with the raw amino-acid sequence, 198 residues long: Na(+)-translocating NADH-quinone reductase subunit E (198 aa).

The next 6 membrane-spanning stretches (helical) occupy residues 11-31 (SIFI…FLAV), 39-59 (FGLG…NNLV), 77-97 (FLSF…LEMI), 110-130 (GIFL…SFMV), 140-160 (VVYG…LAGI), and 176-196 (LGIT…FSGV).

This sequence belongs to the NqrDE/RnfAE family. As to quaternary structure, composed of six subunits; NqrA, NqrB, NqrC, NqrD, NqrE and NqrF.

The protein resides in the cell inner membrane. It catalyses the reaction a ubiquinone + n Na(+)(in) + NADH + H(+) = a ubiquinol + n Na(+)(out) + NAD(+). NQR complex catalyzes the reduction of ubiquinone-1 to ubiquinol by two successive reactions, coupled with the transport of Na(+) ions from the cytoplasm to the periplasm. NqrA to NqrE are probably involved in the second step, the conversion of ubisemiquinone to ubiquinol. The protein is Na(+)-translocating NADH-quinone reductase subunit E of Aliivibrio fischeri (strain ATCC 700601 / ES114) (Vibrio fischeri).